We begin with the raw amino-acid sequence, 614 residues long: Translation initiation factor IF-2 (614 aa).

A tr-type G domain is found at 115 to 283; the sequence is ARAPIVTIMG…ILLIAELNNY (169 aa). The segment at 124 to 131 is G1; it reads GHVDHGKT. Position 124 to 131 (124 to 131) interacts with GTP; it reads GHVDHGKT. The G2 stretch occupies residues 149–153; that stretch reads GITQH. The tract at residues 170–173 is G3; it reads DTPG. GTP-binding positions include 170-174 and 224-227; these read DTPGH and NKMD. The G4 stretch occupies residues 224–227; that stretch reads NKMD. Positions 260–262 are G5; that stretch reads SAL.

Belongs to the TRAFAC class translation factor GTPase superfamily. Classic translation factor GTPase family. IF-2 subfamily.

The protein localises to the cytoplasm. In terms of biological role, one of the essential components for the initiation of protein synthesis. Protects formylmethionyl-tRNA from spontaneous hydrolysis and promotes its binding to the 30S ribosomal subunits. Also involved in the hydrolysis of GTP during the formation of the 70S ribosomal complex. The protein is Translation initiation factor IF-2 of Ureaplasma parvum serovar 3 (strain ATCC 27815 / 27 / NCTC 11736).